The primary structure comprises 377 residues: Queuine tRNA-ribosyltransferase (377 aa).

The active-site Proton acceptor is the Asp-92. Substrate-binding positions include 92–96, Asp-146, Gln-190, and Gly-217; that span reads DSGGF. The RNA binding stretch occupies residues 248 to 254; it reads GVGRPED. Asp-267 (nucleophile) is an active-site residue. The interval 272–276 is RNA binding; important for wobble base 34 recognition; that stretch reads TRHAR. 4 residues coordinate Zn(2+): Cys-305, Cys-307, Cys-310, and His-337.

This sequence belongs to the queuine tRNA-ribosyltransferase family. Homodimer. Within each dimer, one monomer is responsible for RNA recognition and catalysis, while the other monomer binds to the replacement base PreQ1. Zn(2+) serves as cofactor.

It catalyses the reaction 7-aminomethyl-7-carbaguanine + guanosine(34) in tRNA = 7-aminomethyl-7-carbaguanosine(34) in tRNA + guanine. The protein operates within tRNA modification; tRNA-queuosine biosynthesis. In terms of biological role, catalyzes the base-exchange of a guanine (G) residue with the queuine precursor 7-aminomethyl-7-deazaguanine (PreQ1) at position 34 (anticodon wobble position) in tRNAs with GU(N) anticodons (tRNA-Asp, -Asn, -His and -Tyr). Catalysis occurs through a double-displacement mechanism. The nucleophile active site attacks the C1' of nucleotide 34 to detach the guanine base from the RNA, forming a covalent enzyme-RNA intermediate. The proton acceptor active site deprotonates the incoming PreQ1, allowing a nucleophilic attack on the C1' of the ribose to form the product. After dissociation, two additional enzymatic reactions on the tRNA convert PreQ1 to queuine (Q), resulting in the hypermodified nucleoside queuosine (7-(((4,5-cis-dihydroxy-2-cyclopenten-1-yl)amino)methyl)-7-deazaguanosine). This chain is Queuine tRNA-ribosyltransferase, found in Xylella fastidiosa (strain Temecula1 / ATCC 700964).